The sequence spans 80 residues: MKTGIKKVKLHVRKNDEVTVIAGNDKGKSGKVLKVFPQKGRVIVEGVNIRKRHMRPTQGMPQGAIIEREFPIHVSNVKKS.

It belongs to the universal ribosomal protein uL24 family. As to quaternary structure, part of the 50S ribosomal subunit.

One of two assembly initiator proteins, it binds directly to the 5'-end of the 23S rRNA, where it nucleates assembly of the 50S subunit. In terms of biological role, one of the proteins that surrounds the polypeptide exit tunnel on the outside of the subunit. In Chlorobaculum tepidum (strain ATCC 49652 / DSM 12025 / NBRC 103806 / TLS) (Chlorobium tepidum), this protein is Large ribosomal subunit protein uL24.